An 86-amino-acid chain; its full sequence is Serine protease inhibitor Kazal-type 2 (86 aa).

Residues 1–16 (MLRLVLLLLVTDFAAS) form the signal peptide. A Kazal-like domain is found at 32–86 (QFRTPDCGHFDFPACPRNLNPVCGTDMNTYSNECTLCMKIREDGSHINIIKDEPC). Cystine bridges form between C38-C68, C46-C65, and C54-C86.

Expressed in sperm (at protein level). Expressed in testis but not in ovary, brain, heart, kidney or lung. Within testis, expressed in epididymis and germ cells.

It localises to the secreted. Its subcellular location is the cytoplasmic vesicle. The protein resides in the secretory vesicle. The protein localises to the acrosome. In terms of biological role, as a strong inhibitor of acrosin, it is required for normal spermiogenesis. It probably hinders premature activation of proacrosin and other proteases, thus preventing the cascade of events leading to spermiogenesis defects. May be involved in the regulation of serine protease-dependent germ cell apoptosis. It also inhibits trypsin. This Mus musculus (Mouse) protein is Serine protease inhibitor Kazal-type 2 (Spink2).